We begin with the raw amino-acid sequence, 632 residues long: Phosphomethylpyrimidine synthase (632 aa).

Residues asparagine 237, methionine 266, tyrosine 295, histidine 331, 351-353, 392-395, and glutamate 431 contribute to the substrate site; these read SRG and DGLR. Histidine 435 contacts Zn(2+). Residue tyrosine 458 participates in substrate binding. Residue histidine 499 coordinates Zn(2+). Positions 579, 582, and 587 each coordinate [4Fe-4S] cluster.

It belongs to the ThiC family. Homodimer. Requires [4Fe-4S] cluster as cofactor.

It carries out the reaction 5-amino-1-(5-phospho-beta-D-ribosyl)imidazole + S-adenosyl-L-methionine = 4-amino-2-methyl-5-(phosphooxymethyl)pyrimidine + CO + 5'-deoxyadenosine + formate + L-methionine + 3 H(+). The protein operates within cofactor biosynthesis; thiamine diphosphate biosynthesis. Functionally, catalyzes the synthesis of the hydroxymethylpyrimidine phosphate (HMP-P) moiety of thiamine from aminoimidazole ribotide (AIR) in a radical S-adenosyl-L-methionine (SAM)-dependent reaction. The protein is Phosphomethylpyrimidine synthase of Chromobacterium violaceum (strain ATCC 12472 / DSM 30191 / JCM 1249 / CCUG 213 / NBRC 12614 / NCIMB 9131 / NCTC 9757 / MK).